We begin with the raw amino-acid sequence, 475 residues long: CAAX prenyl protease 1 homolog (475 aa).

Over 1-18 (MGMWASLDALWEMPAEKR) the chain is Lumenal. A helical membrane pass occupies residues 19 to 39 (IFGAVLLFSWTVYLWETFLAQ). The Nuclear portion of the chain corresponds to 40–81 (RQRRIYKTTTHVPPELGQIMDSETFEKSRLYQLDKSTFSFWS). A helical membrane pass occupies residues 82 to 102 (GLYSETEGTLILLFGGIPYLW). Over 103–123 (RLSGRFCGYAGFGPEYEITQS) the chain is Lumenal. The chain crosses the membrane as a helical span at residues 124 to 144 (LVFLLLATLFSALTGLPWSLY). The Nuclear portion of the chain corresponds to 145–170 (NTFVIEEKHGFNQQTLGFFMKDAIKK). A helical membrane pass occupies residues 171–191 (FVVTQCILLPVSSLLLYIIKI). The Lumenal portion of the chain corresponds to 192 to 195 (GGDY). Residues 196–216 (FFIYAWLFTLVVSLVLVTIYA) form a helical membrane-spanning segment. Residues 217–347 (DYIAPLFDKF…GHWKLGHTVK (131 aa)) lie on the Nuclear side of the membrane. His335 lines the Zn(2+) pocket. Glu336 is a catalytic residue. His339 lines the Zn(2+) pocket. The chain crosses the membrane as a helical span at residues 348–368 (NIIISQMNSFLCFFLFAVLIG). Residues 369–382 (RKELFAAFGFYDSQ) lie on the Lumenal side of the membrane. Residues 383–405 (PTLIGLLIIFQFIFSPYNEVLSF) traverse the membrane as a helical segment. Residues 406 to 475 (CLTVLSRRFE…LQALKTMKQH (70 aa)) are Nuclear-facing. Glu415 lines the Zn(2+) pocket.

This sequence belongs to the peptidase M48A family. Zn(2+) is required as a cofactor. As to expression, widely expressed. High levels in kidney, prostate, testis and ovary.

Its subcellular location is the endoplasmic reticulum membrane. It is found in the nucleus inner membrane. It localises to the early endosome membrane. The protein localises to the late endosome membrane. It catalyses the reaction Hydrolyzes the peptide bond -P2-(S-farnesyl or geranylgeranyl)C-P1'-P2'-P3'-COOH where P1' and P2' are amino acids with aliphatic side chains and P3' is any C-terminal residue.. In terms of biological role, transmembrane metalloprotease whose catalytic activity is critical for processing lamin A/LMNA on the inner nuclear membrane and clearing clogged translocons on the endoplasmic reticulum. Proteolytically removes the C-terminal three residues of farnesylated proteins. Also plays an antiviral role independently of its protease activity by restricting enveloped RNA and DNA viruses, including influenza A, Zika, Ebola, Sindbis, vesicular stomatitis, cowpox, and vaccinia. Mechanistically, controls IFITM antiviral pathway to hinder viruses from breaching the endosomal barrier by modulating membrane fluidity. This is CAAX prenyl protease 1 homolog from Homo sapiens (Human).